A 408-amino-acid polypeptide reads, in one-letter code: Peptidase T (408 aa).

A Zn(2+)-binding site is contributed by His78. The active site involves Asp80. A Zn(2+)-binding site is contributed by Asp140. The active-site Proton acceptor is Glu174. Residues Glu175, Asp197, and His379 each coordinate Zn(2+).

It belongs to the peptidase M20B family. Zn(2+) serves as cofactor.

It is found in the cytoplasm. The enzyme catalyses Release of the N-terminal residue from a tripeptide.. Cleaves the N-terminal amino acid of tripeptides. The sequence is that of Peptidase T from Staphylococcus aureus (strain bovine RF122 / ET3-1).